A 520-amino-acid chain; its full sequence is GMP synthase [glutamine-hydrolyzing] (520 aa).

Positions 3–200 constitute a Glutamine amidotransferase type-1 domain; the sequence is AIAIIDFGSQ…FLDIANCKRD (198 aa). Cys-84 acts as the Nucleophile in catalysis. Active-site residues include His-175 and Glu-177. The 186-residue stretch at 201 to 386 folds into the GMPS ATP-PPase domain; that stretch reads WTMKSIIEKQ…IGLSNEIIFQ (186 aa). 228–234 contributes to the ATP binding site; the sequence is SGGVDSS.

In terms of assembly, homodimer.

It carries out the reaction XMP + L-glutamine + ATP + H2O = GMP + L-glutamate + AMP + diphosphate + 2 H(+). The protein operates within purine metabolism; GMP biosynthesis; GMP from XMP (L-Gln route): step 1/1. Its function is as follows. Catalyzes the synthesis of GMP from XMP. The sequence is that of GMP synthase [glutamine-hydrolyzing] from Wolbachia sp. subsp. Brugia malayi (strain TRS).